Here is an 81-residue protein sequence, read N- to C-terminus: ATP synthase subunit c, chloroplastic (81 aa).

The next 2 membrane-spanning stretches (helical) occupy residues 3–23 (PIIS…ASIG) and 57–77 (LAFM…LLFA).

Belongs to the ATPase C chain family. In terms of assembly, F-type ATPases have 2 components, F(1) - the catalytic core - and F(0) - the membrane proton channel. F(1) has five subunits: alpha(3), beta(3), gamma(1), delta(1), epsilon(1). F(0) has four main subunits: a(1), b(1), b'(1) and c(10-14). The alpha and beta chains form an alternating ring which encloses part of the gamma chain. F(1) is attached to F(0) by a central stalk formed by the gamma and epsilon chains, while a peripheral stalk is formed by the delta, b and b' chains.

It is found in the plastid. Its subcellular location is the chloroplast thylakoid membrane. F(1)F(0) ATP synthase produces ATP from ADP in the presence of a proton or sodium gradient. F-type ATPases consist of two structural domains, F(1) containing the extramembraneous catalytic core and F(0) containing the membrane proton channel, linked together by a central stalk and a peripheral stalk. During catalysis, ATP synthesis in the catalytic domain of F(1) is coupled via a rotary mechanism of the central stalk subunits to proton translocation. Its function is as follows. Key component of the F(0) channel; it plays a direct role in translocation across the membrane. A homomeric c-ring of between 10-14 subunits forms the central stalk rotor element with the F(1) delta and epsilon subunits. The polypeptide is ATP synthase subunit c, chloroplastic (Cicer arietinum (Chickpea)).